Consider the following 289-residue polypeptide: 4-hydroxybenzoate octaprenyltransferase (289 aa).

The next 7 membrane-spanning stretches (helical) occupy residues 33–53 (LWAL…AVFV), 99–119 (LFVV…TMTI), 141–161 (LPQV…FAAV), 163–183 (ESVP…AVAY), 213–233 (LIIG…GRLN), 238–258 (EFYW…KLIV), and 268–288 (AFLN…MSYW).

This sequence belongs to the UbiA prenyltransferase family. It depends on Mg(2+) as a cofactor.

Its subcellular location is the cell inner membrane. The catalysed reaction is all-trans-octaprenyl diphosphate + 4-hydroxybenzoate = 4-hydroxy-3-(all-trans-octaprenyl)benzoate + diphosphate. Its pathway is cofactor biosynthesis; ubiquinone biosynthesis. In terms of biological role, catalyzes the prenylation of para-hydroxybenzoate (PHB) with an all-trans polyprenyl group. Mediates the second step in the final reaction sequence of ubiquinone-8 (UQ-8) biosynthesis, which is the condensation of the polyisoprenoid side chain with PHB, generating the first membrane-bound Q intermediate 3-octaprenyl-4-hydroxybenzoate. The protein is 4-hydroxybenzoate octaprenyltransferase of Enterobacter sp. (strain 638).